Reading from the N-terminus, the 37-residue chain is Delta-amaurobitoxin-Pl1a (37 aa).

4 cysteine pairs are disulfide-bonded: C2–C18, C9–C23, C17–C33, and C25–C31. S37 bears the Serine amide mark.

This sequence belongs to the neurotoxin 07 (Beta/delta-agtx) family. 02 (aga-3) subfamily. As to expression, expressed by the venom gland.

It is found in the secreted. Functionally, binds at site 4 of sodium channels (Nav) and inhibits the fast inactivation of cockroach channels. This toxin is active only on insects. Has a potent activity against S.litura larvae. The chain is Delta-amaurobitoxin-Pl1a from Pireneitega luctuosa (Tangled nest spider).